The sequence spans 868 residues: Protein translocase subunit SecA (868 aa).

ATP contacts are provided by residues Gln-87, 105 to 109 (GEGKT), and Asp-500. Zn(2+) contacts are provided by Cys-849, Cys-851, Cys-860, and His-861.

It belongs to the SecA family. In terms of assembly, monomer and homodimer. Part of the essential Sec protein translocation apparatus which comprises SecA, SecYEG and auxiliary proteins SecDF-YajC and YidC. Zn(2+) serves as cofactor.

It is found in the cell membrane. The protein resides in the cytoplasm. It carries out the reaction ATP + H2O + cellular proteinSide 1 = ADP + phosphate + cellular proteinSide 2.. Part of the Sec protein translocase complex. Interacts with the SecYEG preprotein conducting channel. Has a central role in coupling the hydrolysis of ATP to the transfer of proteins into and across the cell membrane, serving both as a receptor for the preprotein-SecB complex and as an ATP-driven molecular motor driving the stepwise translocation of polypeptide chains across the membrane. The protein is Protein translocase subunit SecA of Wolbachia pipientis wMel.